The chain runs to 426 residues: UDP-N-acetylglucosamine 1-carboxyvinyltransferase (426 aa).

23 to 24 (KN) lines the phosphoenolpyruvate pocket. R99 contributes to the UDP-N-acetyl-alpha-D-glucosamine binding site. D123 serves as the catalytic Proton donor. 2 residues coordinate UDP-N-acetyl-alpha-D-glucosamine: D311 and I333.

Belongs to the EPSP synthase family. MurA subfamily.

Its subcellular location is the cytoplasm. The enzyme catalyses phosphoenolpyruvate + UDP-N-acetyl-alpha-D-glucosamine = UDP-N-acetyl-3-O-(1-carboxyvinyl)-alpha-D-glucosamine + phosphate. The protein operates within cell wall biogenesis; peptidoglycan biosynthesis. In terms of biological role, cell wall formation. Adds enolpyruvyl to UDP-N-acetylglucosamine. The polypeptide is UDP-N-acetylglucosamine 1-carboxyvinyltransferase (Nocardia farcinica (strain IFM 10152)).